Reading from the N-terminus, the 459-residue chain is mRNA-capping enzyme subunit alpha (459 aa).

Lysine 70 serves as the catalytic N6-GMP-lysine intermediate. The tract at residues 415-459 is disordered; it reads MAGGSGRPLPSQSQNATLSTSKPVHSQPPSNDKEPKYVDEDDWSD. Positions 424–444 are enriched in polar residues; sequence PSQSQNATLSTSKPVHSQPPS.

Belongs to the eukaryotic GTase family. As to quaternary structure, heterodimer. The mRNA-capping enzyme is composed of two separate chains alpha and beta, respectively a mRNA guanylyltransferase and an mRNA 5'-triphosphate monophosphatase.

The protein localises to the nucleus. It catalyses the reaction a 5'-end diphospho-ribonucleoside in mRNA + GTP + H(+) = a 5'-end (5'-triphosphoguanosine)-ribonucleoside in mRNA + diphosphate. Functionally, second step of mRNA capping. Transfer of the GMP moiety of GTP to the 5'-diphosphate terminus of RNA via a covalent enzyme-GMP reaction intermediate. This chain is mRNA-capping enzyme subunit alpha (CEG1), found in Saccharomyces cerevisiae (strain ATCC 204508 / S288c) (Baker's yeast).